The sequence spans 592 residues: Aspartate--tRNA(Asp/Asn) ligase (592 aa).

Residue E182 coordinates L-aspartate. An aspartate region spans residues 206-209; that stretch reads QIFK. Residue R228 coordinates L-aspartate. Residues 228-230 and Q237 contribute to the ATP site; that span reads RDE. Residue H455 coordinates L-aspartate. E489 contacts ATP. R496 contacts L-aspartate. ATP is bound at residue 541-544; it reads GLDR.

The protein belongs to the class-II aminoacyl-tRNA synthetase family. Type 1 subfamily. Homodimer.

The protein resides in the cytoplasm. The catalysed reaction is tRNA(Asx) + L-aspartate + ATP = L-aspartyl-tRNA(Asx) + AMP + diphosphate. Its function is as follows. Aspartyl-tRNA synthetase with relaxed tRNA specificity since it is able to aspartylate not only its cognate tRNA(Asp) but also tRNA(Asn). Reaction proceeds in two steps: L-aspartate is first activated by ATP to form Asp-AMP and then transferred to the acceptor end of tRNA(Asp/Asn). This is Aspartate--tRNA(Asp/Asn) ligase from Thermoanaerobacter pseudethanolicus (strain ATCC 33223 / 39E) (Clostridium thermohydrosulfuricum).